The following is a 119-amino-acid chain: Large ribosomal subunit protein bL20 (119 aa).

This sequence belongs to the bacterial ribosomal protein bL20 family.

In terms of biological role, binds directly to 23S ribosomal RNA and is necessary for the in vitro assembly process of the 50S ribosomal subunit. It is not involved in the protein synthesizing functions of that subunit. This chain is Large ribosomal subunit protein bL20, found in Colwellia psychrerythraea (strain 34H / ATCC BAA-681) (Vibrio psychroerythus).